We begin with the raw amino-acid sequence, 267 residues long: Small ribosomal subunit protein uS3 (267 aa).

A KH type-2 domain is found at 38–106 (IRKLLATGME…QVQLNILEVK (69 aa)). The tract at residues 215 to 267 (TAASAPAGDRDRPRRERPSRPRRSGSTGTTATSTEAGRAATAVVEAPAENQEG) is disordered. The segment covering 222–233 (GDRDRPRRERPS) has biased composition (basic and acidic residues). Over residues 238–256 (SGSTGTTATSTEAGRAATA) the composition is skewed to low complexity.

The protein belongs to the universal ribosomal protein uS3 family. As to quaternary structure, part of the 30S ribosomal subunit. Forms a tight complex with proteins S10 and S14.

Its function is as follows. Binds the lower part of the 30S subunit head. Binds mRNA in the 70S ribosome, positioning it for translation. In Nocardia farcinica (strain IFM 10152), this protein is Small ribosomal subunit protein uS3.